Reading from the N-terminus, the 581-residue chain is Proteasome-associated ATPase (581 aa).

The disordered stretch occupies residues Met-1–Asp-28. Over residues Met-14–Ser-24 the composition is skewed to polar residues. Positions Glu-27–Lys-66 form a coiled coil. Gly-248 to Leu-253 provides a ligand contact to ATP. A disordered region spans residues Gly-561–Leu-581. Residues Glu-572–Leu-581 are compositionally biased toward polar residues. Residues Tyr-580 to Leu-581 form a docks into pockets in the proteasome alpha-ring region.

It belongs to the AAA ATPase family. As to quaternary structure, homohexamer. Assembles into a hexameric ring structure that caps the 20S proteasome core. Strongly interacts with the prokaryotic ubiquitin-like protein Pup through a hydrophobic interface; the interacting region of ARC lies in its N-terminal coiled-coil domain. There is one Pup binding site per ARC hexamer ring. Upon ATP-binding, the C-terminus of ARC interacts with the alpha-rings of the proteasome core, possibly by binding to the intersubunit pockets.

It functions in the pathway protein degradation; proteasomal Pup-dependent pathway. In terms of biological role, ATPase which is responsible for recognizing, binding, unfolding and translocation of pupylated proteins into the bacterial 20S proteasome core particle. May be essential for opening the gate of the 20S proteasome via an interaction with its C-terminus, thereby allowing substrate entry and access to the site of proteolysis. Thus, the C-termini of the proteasomal ATPase may function like a 'key in a lock' to induce gate opening and therefore regulate proteolysis. The polypeptide is Proteasome-associated ATPase (Sanguibacter keddieii (strain ATCC 51767 / DSM 10542 / NCFB 3025 / ST-74)).